We begin with the raw amino-acid sequence, 587 residues long: Nucleoporin ndc-1 (587 aa).

Residues 1–79 (MMGENSSAYT…FHSEIDVRKK (79 aa)) are Cytoplasmic-facing. A disordered region spans residues 32 to 55 (ASTSATSSPNLRKSPNRGFSSPRA). A helical transmembrane segment spans residues 80-100 (LASFVCGAAVALSFIVTVSIL). At 101–121 (KLSIWAPFSSVQDSLTWWLYP) the chain is on the perinuclear space side. Residues 122–142 (TSWPVTLFIWLSSVAWTFLII) traverse the membrane as a helical segment. Topologically, residues 143 to 161 (HQFCTVTQVPRIPITDTYA) are cytoplasmic. The helical transmembrane segment at 162–182 (WAGAALEFVHRLIFVYTAFTV) threads the bilayer. Residues 183-187 (SESSF) lie on the Perinuclear space side of the membrane. Residues 188–208 (FEDFAWIAIAFSVAISSALVI) form a helical membrane-spanning segment. Residues 209–255 (FRSDFHLNFSNVQVNSFKTLIDFAKSLPYGSLAETSGVDAAIAYTAA) are Cytoplasmic-facing. Residues 256 to 276 (MALTVFGSPLLWGFSAWWLLI) traverse the membrane as a helical segment. The Perinuclear space portion of the chain corresponds to 277–281 (NIQFH). A helical membrane pass occupies residues 282–302 (LVLFGVCFAQQFFAKIFMKIV). Topologically, residues 303–587 (NQIVMKPMKF…TIKLVCAEEI (285 aa)) are cytoplasmic.

This sequence belongs to the NDC1 family.

It localises to the nucleus. Its subcellular location is the nuclear pore complex. The protein resides in the nucleus membrane. Component of the nuclear pore complex (NPC), which plays a key role in de novo assembly and insertion of NPC in the nuclear envelope. The polypeptide is Nucleoporin ndc-1 (npp-22) (Caenorhabditis briggsae).